The chain runs to 564 residues: Kelch repeat and BTB domain-containing protein 1 (564 aa).

Positions 21–88 constitute a BTB domain; sequence CDINIVINDE…IYGIPLSLTN (68 aa). The region spanning 123–219 is the BACK domain; it reads CIDFYIYADK…SLLSPQVIKS (97 aa). Kelch repeat units follow at residues 252 to 297, 298 to 346, 347 to 395, 397 to 441, 442 to 492, and 494 to 539; these read IELI…VLDN, IIYM…ADDE, YIYC…MLNG, IYVI…VHDG, KIYI…SAHN, and LYVG…CEPI.

In terms of assembly, interacts (via BTB domain) with host CUL3.

The protein resides in the host cytoplasm. In terms of biological role, probable substrate-specific adapter of CUL3-containing E3 ubiquitin-protein ligases which mediate the ubiquitination and subsequent proteasomal degradation of host target proteins. In Cowpox virus (strain GRI-90 / Grishak) (CPV), this protein is Kelch repeat and BTB domain-containing protein 1 (KBTB1).